The following is an 80-amino-acid chain: UPF0154 protein SZO_03240 (80 aa).

The chain crosses the membrane as a helical span at residues 4-24 (AIWILLIIVALTAGLFGGIFI).

This sequence belongs to the UPF0154 family.

The protein resides in the cell membrane. The sequence is that of UPF0154 protein SZO_03240 from Streptococcus equi subsp. zooepidemicus (strain H70).